The sequence spans 103 residues: Small ribosomal subunit protein bS20 (103 aa).

The span at 1–20 shows a compositional bias: basic residues; that stretch reads MATAKPKKKNPRLASGRKRV. Positions 1 to 31 are disordered; sequence MATAKPKKKNPRLASGRKRVRQDTKLNAANT.

The protein belongs to the bacterial ribosomal protein bS20 family.

In terms of biological role, binds directly to 16S ribosomal RNA. The protein is Small ribosomal subunit protein bS20 of Polaromonas sp. (strain JS666 / ATCC BAA-500).